Reading from the N-terminus, the 269-residue chain is MFPLDNSRRFLWLLVLLFGCFLPCLADLKVLVRLEDGQLTEENLQADSDKDFITLEFRKTDGTFVTYLADFKQDVKIFHVLILGELERGQSQFQALCFVTRLQSNEIIPSESMAKLRQKNPHAVRQAEEMRGTDTLQMDVAINFTKGVQLTPHIHNICAEAKEAIYTRQEDVRLWLERGIDGSMFEVLPQPSSIPSLHPCKLCPQDWKPCICSYHLSLEWIPCSLKYCKNRDSSVKTTSYRCGIRSCQKAFTFHFYVAQKQLCLWDEET.

The signal sequence occupies residues Met-1 to Ala-26.

This sequence belongs to the OAF family.

In Xenopus laevis (African clawed frog), this protein is Out at first protein homolog (oaf).